A 1029-amino-acid polypeptide reads, in one-letter code: Tyrosine-protein kinase-like otk (1029 aa).

Residues 1-18 (MISIYGLVMALMMASVLA) form the signal peptide. Residues 19–577 (SSSRFQRVPQ…GGDGFLVTRA (559 aa)) lie on the Extracellular side of the membrane. 5 Ig-like C2-type domains span residues 21–110 (SRFQ…AKLS), 109–195 (LSVI…RVMS), 247–361 (PEDL…APIS), 364–459 (PGIL…VAIN), and 464–554 (PKFS…VQLV). Residue Asn35 is glycosylated (N-linked (GlcNAc...) asparagine). Disulfide bonds link Cys42–Cys91, Cys133–Cys184, Cys272–Cys350, and Cys395–Cys443. Residues Asn332, Asn413, Asn425, Asn440, Asn453, Asn508, and Asn520 are each glycosylated (N-linked (GlcNAc...) asparagine). An intrachain disulfide couples Cys486 to Cys538. Residues 578–598 (VLITMTVALAYIVLVVGLMLW) traverse the membrane as a helical segment. Over 599-1029 (CRYRRQARKA…LSKAMQSAEK (431 aa)) the chain is Cytoplasmic. 2 disordered regions span residues 613–675 (LSTK…KKSA) and 714–756 (SPSD…KTSM). Polar residues predominate over residues 651–669 (KSSGDAQKSDDTACSQQSR). Position 674 is a phosphoserine (Ser674). The 337-residue stretch at 688–1024 (LSELIQIGRG…QLGAALSKAM (337 aa)) folds into the Protein kinase; inactive domain. Residues 716-727 (SDKDADTEKQHS) show a composition bias toward basic and acidic residues.

The protein belongs to the protein kinase superfamily. Tyr protein kinase family. Insulin receptor subfamily. In terms of assembly, interacts with plexA; component of a receptor complex that mediates the repulsive signaling in response to Semaphorin ligands.

The protein localises to the cell membrane. In terms of biological role, acts as a calcium-dependent, homophilic cell adhesion molecule that regulates neural recognition during the development of the nervous system. Component of the repulsive Plexin signaling response to regulate motor axon guidance at the embryonic stage. Also component of a receptor complex that is required in the adult visual system to innervate the lamina layer; specific targeting of R1-R6 axons. This chain is Tyrosine-protein kinase-like otk, found in Drosophila simulans (Fruit fly).